The chain runs to 258 residues: Large ribosomal subunit protein bL19m (258 aa).

The segment at 235–258 (SKGLTGGVGGGGGKQKGQESKKKN) is disordered. The segment covering 238 to 249 (LTGGVGGGGGKQ) has biased composition (gly residues).

Belongs to the bacterial ribosomal protein bL19 family. In terms of assembly, component of the mitochondrial large ribosomal subunit (mt-LSU). Mature N.crassa 74S mitochondrial ribosomes consist of a small (37S) and a large (54S) subunit. The 37S small subunit contains a 16S ribosomal RNA (16S mt-rRNA) and 32 different proteins. The 54S large subunit contains a 23S rRNA (23S mt-rRNA) and 42 different proteins.

The protein localises to the mitochondrion. Component of the mitochondrial ribosome (mitoribosome), a dedicated translation machinery responsible for the synthesis of mitochondrial genome-encoded proteins, including at least some of the essential transmembrane subunits of the mitochondrial respiratory chain. The mitoribosomes are attached to the mitochondrial inner membrane and translation products are cotranslationally integrated into the membrane. The polypeptide is Large ribosomal subunit protein bL19m (img1) (Neurospora crassa (strain ATCC 24698 / 74-OR23-1A / CBS 708.71 / DSM 1257 / FGSC 987)).